We begin with the raw amino-acid sequence, 541 residues long: Phosphatidylethanolamine transferase Mcr-1 (541 aa).

At 1–14 the chain is on the cytoplasmic side; that stretch reads MMQHTSVWYRRSVS. A helical transmembrane segment spans residues 15-35; the sequence is PFVLVASVAVFLTATANLTFF. Residues 36-47 are Periplasmic-facing; the sequence is DKISQTYPIADN. Residues 48 to 68 form a helical membrane-spanning segment; it reads LGFVLTIAVVLFGAMLLITTL. At 69–73 the chain is on the cytoplasmic side; sequence LSSYR. The chain crosses the membrane as a helical span at residues 74–94; the sequence is YVLKPVLILLLIMGAVTSYFT. The Periplasmic portion of the chain corresponds to 95-122; it reads DTYGTVYDTTMLQNALQTDQAETKDLLN. A helical membrane pass occupies residues 123–143; that stretch reads AAFIMRIIGLGVLPSLLVAFV. Topologically, residues 144–157 are cytoplasmic; it reads KVDYPTWGKGLMRR. The chain crosses the membrane as a helical span at residues 158 to 178; it reads LGLIVASLALILLPVVAFSSH. Topologically, residues 179 to 541 are periplasmic; it reads YASFFRVHKP…KVKDRTAFIR (363 aa). Zn(2+) is bound by residues Glu-246 and Thr-285. Disulfide bonds link Cys-281/Cys-291, Cys-356/Cys-364, and Cys-414/Cys-422. Thr-285 carries the phosphothreonine modification. Zn(2+) is bound by residues Asp-465 and His-466.

It belongs to the phosphoethanolamine transferase family. In terms of assembly, monomer. In terms of processing, phosphorylated at Thr-285; may represent an intermediate in the catalytic mechanism.

It localises to the cell inner membrane. It catalyses the reaction lipid A (E. coli) + a 1,2-diacyl-sn-glycero-3-phosphoethanolamine + H(+) = lipid A 4'-(2-aminoethyl diphosphate) (E. coli) + a 1,2-diacyl-sn-glycerol. EDTA may inhibit activity. May be inhibited by ethanolamine. Functionally, probably catalyzes the addition of a phosphoethanolamine moiety to lipid A. Phosphoethanolamine modification of lipid A confers polymyxin resistance. Confers resistance to polymyxin-type antibiotics such as colistin; in the E.coli strain W3110. This Escherichia coli protein is Phosphatidylethanolamine transferase Mcr-1 (mcr1).